Reading from the N-terminus, the 189-residue chain is Elongation factor P (189 aa).

It belongs to the elongation factor P family.

The protein resides in the cytoplasm. It functions in the pathway protein biosynthesis; polypeptide chain elongation. In terms of biological role, involved in peptide bond synthesis. Stimulates efficient translation and peptide-bond synthesis on native or reconstituted 70S ribosomes in vitro. Probably functions indirectly by altering the affinity of the ribosome for aminoacyl-tRNA, thus increasing their reactivity as acceptors for peptidyl transferase. The protein is Elongation factor P of Rhizobium meliloti (strain 1021) (Ensifer meliloti).